Reading from the N-terminus, the 180-residue chain is Translation initiation factor IF-3 (180 aa).

Belongs to the IF-3 family. Monomer.

It localises to the cytoplasm. Its function is as follows. IF-3 binds to the 30S ribosomal subunit and shifts the equilibrium between 70S ribosomes and their 50S and 30S subunits in favor of the free subunits, thus enhancing the availability of 30S subunits on which protein synthesis initiation begins. The protein is Translation initiation factor IF-3 of Hyphomonas neptunium (strain ATCC 15444).